The following is a 666-amino-acid chain: Peptidase S41 family protein phomP1' (666 aa).

The first 27 residues, 1–27, serve as a signal peptide directing secretion; it reads MSSFLVQTAVVRLFLLGVVFWFPFALS. N-linked (GlcNAc...) asparagine glycans are attached at residues asparagine 70, asparagine 214, and asparagine 234. The tract at residues 303-504 is peptidase S41 domain; sequence DVAVLQITSF…LLQAQGVRTV (202 aa). Residues asparagine 555 and asparagine 612 are each glycosylated (N-linked (GlcNAc...) asparagine).

Belongs to the peptidase S41A family.

It functions in the pathway mycotoxin biosynthesis. Functionally, peptidase S41 family protein; part of the gene cluster that mediates the biosynthesis of the phomopsins, a group of hexapeptide mycotoxins which infects lupins and causes lupinosis disease in livestock. Within the pathway, phomP1 and phomP1' are probably involved in the processing of the phomA and phomA' precursors. The pathway starts with the processing of the precursor phomA by several endopeptidases including kexin proteases as well as the cluster-specific S41 family peptidase phomP1 and the oligopeptidase phomG to produce 10 identical copies of the hexapeptide Tyr-Val-Ile-Pro-Ile-Asp. After being excised from the precursor peptide, the core peptides are cyclized and modified post-translationally by enzymes encoded within the gene cluster. The timing and order of proteolysis of the phomA precursor and PTMs are still unknown. Two tyrosinase-like enzymes, phomQ1 and phomQ2, catalyze the chlorination and hydroxylation of Tyr, respectively. PhomYb, is proposed to be involved in the construction of the macrocyclic structure. The other 4 ustYa family proteins may be involved in PTMs that generate the unique structure of phomopsin A. PhomYa is required for the hydroxylation of C-beta of Tyr. PhomYc, phomYd, and phomYe are responsible for the biosynthesis of 2,3-dehydroisoleucine (dIle), 2,3-dehydroaspartic acid (dAsp), and 3,4-dehydroproline (dPro), respectively. While dIle formation by phomYc is indispensable for the installation of dAsp by phomYd, the order of the other PTMs have not been elucidated yet. Most of the biosynthetic enzymes likely have broad substrate specificity, and thus, there might be a metabolic grid from a precursor to phomopsin A. The enzyme(s) responsible for the biosynthesis of 3,4-dehydrovaline (dVal) have also not been identified yet. Finally, phomM acts as an S-adenosylmethionine-dependent alpha-N-methyltransferase that catalyzes two successive N-methylation reactions, converting N-desmethyl-phomopsin A to phomopsin A and phomopsin A further to an N,N-dimethylated congener called phomopsin E. This chain is Peptidase S41 family protein phomP1', found in Diaporthe leptostromiformis (Lupinosis disease fungus).